Consider the following 483-residue polypeptide: V-type proton ATPase subunit H (483 aa).

Phosphoserine is present on residues serine 59 and serine 483.

Belongs to the V-ATPase H subunit family. As to quaternary structure, V-ATPase is a heteromultimeric enzyme made up of two complexes: the ATP-hydrolytic V1 complex and the proton translocation V0 complex. The V1 complex consists of three catalytic AB heterodimers that form a heterohexamer, three peripheral stalks each consisting of EG heterodimers, one central rotor including subunits D and F, and the regulatory subunits C and H. The proton translocation complex V0 consists of the proton transport subunit a, a ring of proteolipid subunits c9c'', rotary subunit d, subunits e and f, and the accessory subunits ATP6AP1/Ac45 and ATP6AP2/PRR. Interacts with AP2M1.

The protein resides in the cytoplasmic vesicle. The protein localises to the clathrin-coated vesicle membrane. In terms of biological role, subunit of the V1 complex of vacuolar(H+)-ATPase (V-ATPase), a multisubunit enzyme composed of a peripheral complex (V1) that hydrolyzes ATP and a membrane integral complex (V0) that translocates protons. V-ATPase is responsible for acidifying and maintaining the pH of intracellular compartments and in some cell types, is targeted to the plasma membrane, where it is responsible for acidifying the extracellular environment. Subunit H is essential for V-ATPase activity, but not for the assembly of the complex. Involved in the endocytosis mediated by clathrin-coated pits, required for the formation of endosomes. The protein is V-type proton ATPase subunit H (Atp6v1h) of Mus musculus (Mouse).